The following is a 218-amino-acid chain: Small ribosomal subunit protein uS3c (218 aa).

One can recognise a KH type-2 domain in the interval Ile-39 to Ala-118.

The protein belongs to the universal ribosomal protein uS3 family. In terms of assembly, part of the 30S ribosomal subunit.

Its subcellular location is the plastid. The protein localises to the chloroplast. The chain is Small ribosomal subunit protein uS3c (rps3) from Ipomoea purpurea (Common morning glory).